Here is a 247-residue protein sequence, read N- to C-terminus: 1-(5-phosphoribosyl)-5-[(5-phosphoribosylamino)methylideneamino] imidazole-4-carboxamide isomerase (247 aa).

The active-site Proton acceptor is Asp8. Asp131 serves as the catalytic Proton donor.

This sequence belongs to the HisA/HisF family.

The protein resides in the cytoplasm. The catalysed reaction is 1-(5-phospho-beta-D-ribosyl)-5-[(5-phospho-beta-D-ribosylamino)methylideneamino]imidazole-4-carboxamide = 5-[(5-phospho-1-deoxy-D-ribulos-1-ylimino)methylamino]-1-(5-phospho-beta-D-ribosyl)imidazole-4-carboxamide. The protein operates within amino-acid biosynthesis; L-histidine biosynthesis; L-histidine from 5-phospho-alpha-D-ribose 1-diphosphate: step 4/9. In Methylobacillus flagellatus (strain ATCC 51484 / DSM 6875 / VKM B-1610 / KT), this protein is 1-(5-phosphoribosyl)-5-[(5-phosphoribosylamino)methylideneamino] imidazole-4-carboxamide isomerase.